A 313-amino-acid polypeptide reads, in one-letter code: Probable myosin light chain kinase DDB_G0292624 (313 aa).

In terms of domain architecture, Protein kinase spans 6–264; it reads YELHKEIGKG…AKQALEHPWI (259 aa). ATP-binding positions include 12-20 and K35; that span reads IGKGAFSVV. D125 serves as the catalytic Proton acceptor.

Belongs to the protein kinase superfamily. CAMK Ser/Thr protein kinase family. CaMK subfamily.

The catalysed reaction is L-seryl-[myosin light chain] + ATP = O-phospho-L-seryl-[myosin light chain] + ADP + H(+). It carries out the reaction L-threonyl-[myosin light chain] + ATP = O-phospho-L-threonyl-[myosin light chain] + ADP + H(+). With respect to regulation, does not have a calmodulin-binding domain. Functionally, may phosphorylate a specific serine in the N-terminus of a myosin light chain. The protein is Probable myosin light chain kinase DDB_G0292624 of Dictyostelium discoideum (Social amoeba).